A 459-amino-acid polypeptide reads, in one-letter code: Vicilin (459 aa).

The signal sequence occupies residues 1–28; that stretch reads MAATTMKASFPLLMLMGISFLASVCVSS. One can recognise a Cupin type-1 1 domain in the interval 36-194; the sequence is FIFKSNKFQT…SFNTDYEEIE (159 aa). Disordered stretches follow at residues 235–258, 321–346, and 430–459; these read LSKN…NLRS, ELVG…QGEE, and ENQK…LSSV. Residues 238–251 are compositionally biased toward low complexity; it reads NAKSTSKKSVSSES. In terms of domain architecture, Cupin type-1 2 spans 254-426; the sequence is FNLRSRGPIY…AFPGSAQEVD (173 aa). The span at 337 to 346 shows a compositional bias: acidic residues; it reads DDEEEEQGEE. The segment covering 444-459 has biased composition (basic and acidic residues); sequence QRERGSRETRDRLSSV.

This sequence belongs to the 7S seed storage protein family.

It localises to the vacuole. The protein localises to the aleurone grain. Functionally, seed storage protein. In Pisum sativum (Garden pea), this protein is Vicilin.